The primary structure comprises 331 residues: Protein RecA (331 aa).

66–73 is a binding site for ATP; the sequence is GPESSGKT.

Belongs to the RecA family.

It is found in the cytoplasm. Can catalyze the hydrolysis of ATP in the presence of single-stranded DNA, the ATP-dependent uptake of single-stranded DNA by duplex DNA, and the ATP-dependent hybridization of homologous single-stranded DNAs. It interacts with LexA causing its activation and leading to its autocatalytic cleavage. The sequence is that of Protein RecA from Acholeplasma laidlawii (strain PG-8A).